We begin with the raw amino-acid sequence, 326 residues long: Probable cell division protein WhiA (326 aa).

A DNA-binding region (H-T-H motif) is located at residues 275–308 (SLEELGQLSDPPLTKDAVAGRIRRLLAMADKKAS).

The protein belongs to the WhiA family.

In terms of biological role, involved in cell division and chromosome segregation. This Beutenbergia cavernae (strain ATCC BAA-8 / DSM 12333 / CCUG 43141 / JCM 11478 / NBRC 16432 / NCIMB 13614 / HKI 0122) protein is Probable cell division protein WhiA.